Reading from the N-terminus, the 154-residue chain is SsrA-binding protein (154 aa).

This sequence belongs to the SmpB family.

It localises to the cytoplasm. In terms of biological role, required for rescue of stalled ribosomes mediated by trans-translation. Binds to transfer-messenger RNA (tmRNA), required for stable association of tmRNA with ribosomes. tmRNA and SmpB together mimic tRNA shape, replacing the anticodon stem-loop with SmpB. tmRNA is encoded by the ssrA gene; the 2 termini fold to resemble tRNA(Ala) and it encodes a 'tag peptide', a short internal open reading frame. During trans-translation Ala-aminoacylated tmRNA acts like a tRNA, entering the A-site of stalled ribosomes, displacing the stalled mRNA. The ribosome then switches to translate the ORF on the tmRNA; the nascent peptide is terminated with the 'tag peptide' encoded by the tmRNA and targeted for degradation. The ribosome is freed to recommence translation, which seems to be the essential function of trans-translation. This is SsrA-binding protein from Acetivibrio thermocellus (strain ATCC 27405 / DSM 1237 / JCM 9322 / NBRC 103400 / NCIMB 10682 / NRRL B-4536 / VPI 7372) (Clostridium thermocellum).